We begin with the raw amino-acid sequence, 415 residues long: Serine hydroxymethyltransferase (415 aa).

(6S)-5,6,7,8-tetrahydrofolate-binding positions include L117 and 121–123; that span reads GHL. An N6-(pyridoxal phosphate)lysine modification is found at K226. (6S)-5,6,7,8-tetrahydrofolate is bound by residues E241 and 349 to 351; that span reads SPF.

The protein belongs to the SHMT family. In terms of assembly, homodimer. Pyridoxal 5'-phosphate serves as cofactor.

It is found in the cytoplasm. The enzyme catalyses (6R)-5,10-methylene-5,6,7,8-tetrahydrofolate + glycine + H2O = (6S)-5,6,7,8-tetrahydrofolate + L-serine. Its pathway is one-carbon metabolism; tetrahydrofolate interconversion. It functions in the pathway amino-acid biosynthesis; glycine biosynthesis; glycine from L-serine: step 1/1. Catalyzes the reversible interconversion of serine and glycine with tetrahydrofolate (THF) serving as the one-carbon carrier. This reaction serves as the major source of one-carbon groups required for the biosynthesis of purines, thymidylate, methionine, and other important biomolecules. Also exhibits THF-independent aldolase activity toward beta-hydroxyamino acids, producing glycine and aldehydes, via a retro-aldol mechanism. The polypeptide is Serine hydroxymethyltransferase (Geotalea daltonii (strain DSM 22248 / JCM 15807 / FRC-32) (Geobacter daltonii)).